The sequence spans 224 residues: Octanoyltransferase (224 aa).

The 196-residue stretch at 29–224 (PGTPDELWLC…GDRLESYLSP (196 aa)) folds into the BPL/LPL catalytic domain. Residues 68-75 (RGGQVTYH), 157-159 (ALG), and 170-172 (GLA) each bind substrate. The active-site Acyl-thioester intermediate is the Cys188.

Belongs to the LipB family.

It is found in the cytoplasm. It catalyses the reaction octanoyl-[ACP] + L-lysyl-[protein] = N(6)-octanoyl-L-lysyl-[protein] + holo-[ACP] + H(+). It functions in the pathway protein modification; protein lipoylation via endogenous pathway; protein N(6)-(lipoyl)lysine from octanoyl-[acyl-carrier-protein]: step 1/2. Catalyzes the transfer of endogenously produced octanoic acid from octanoyl-acyl-carrier-protein onto the lipoyl domains of lipoate-dependent enzymes. Lipoyl-ACP can also act as a substrate although octanoyl-ACP is likely to be the physiological substrate. This Methylibium petroleiphilum (strain ATCC BAA-1232 / LMG 22953 / PM1) protein is Octanoyltransferase.